A 440-amino-acid polypeptide reads, in one-letter code: UDP-N-acetylglucosamine 1-carboxyvinyltransferase (440 aa).

Phosphoenolpyruvate is bound at residue 22 to 23 (KN). R102 is a binding site for UDP-N-acetyl-alpha-D-glucosamine. The active-site Proton donor is the C126. Position 126 is a 2-(S-cysteinyl)pyruvic acid O-phosphothioketal (C126). Residues 131-135 (RPVDQ), D320, and I342 contribute to the UDP-N-acetyl-alpha-D-glucosamine site.

The protein belongs to the EPSP synthase family. MurA subfamily.

It localises to the cytoplasm. It carries out the reaction phosphoenolpyruvate + UDP-N-acetyl-alpha-D-glucosamine = UDP-N-acetyl-3-O-(1-carboxyvinyl)-alpha-D-glucosamine + phosphate. It functions in the pathway cell wall biogenesis; peptidoglycan biosynthesis. Functionally, cell wall formation. Adds enolpyruvyl to UDP-N-acetylglucosamine. The polypeptide is UDP-N-acetylglucosamine 1-carboxyvinyltransferase (Acidovorax ebreus (strain TPSY) (Diaphorobacter sp. (strain TPSY))).